A 420-amino-acid polypeptide reads, in one-letter code: 2,3-dimethylmalate dehydratase large subunit (420 aa).

[4Fe-4S] cluster-binding residues include Cys-301, Cys-361, and Cys-364.

Belongs to the aconitase/IPM isomerase family. LeuC type 2 subfamily. Heterodimer of a large and a small subunit. Requires [4Fe-4S] cluster as cofactor.

It carries out the reaction (2R,3S)-2,3-dimethylmalate = dimethylmaleate + H2O. Its pathway is cofactor degradation; nicotinate degradation; propanoate and pyruvate from 6-hydroxynicotinate: step 7/8. In Eubacterium barkeri (Clostridium barkeri), this protein is 2,3-dimethylmalate dehydratase large subunit (dmdA).